The chain runs to 365 residues: DNA replication and repair protein RecF (365 aa).

30–37 (GRNAQGKT) contacts ATP.

The protein belongs to the RecF family.

Its subcellular location is the cytoplasm. In terms of biological role, the RecF protein is involved in DNA metabolism; it is required for DNA replication and normal SOS inducibility. RecF binds preferentially to single-stranded, linear DNA. It also seems to bind ATP. The chain is DNA replication and repair protein RecF from Streptococcus pneumoniae (strain 70585).